Consider the following 113-residue polypeptide: Iron-sulfur cluster insertion protein ErpA (113 aa).

Iron-sulfur cluster-binding residues include Cys41, Cys105, and Cys107.

This sequence belongs to the HesB/IscA family. As to quaternary structure, homodimer. The cofactor is iron-sulfur cluster.

Required for insertion of 4Fe-4S clusters for at least IspG. In Histophilus somni (strain 2336) (Haemophilus somnus), this protein is Iron-sulfur cluster insertion protein ErpA.